Consider the following 130-residue polypeptide: MSMQDPIADMLTRIRNGQAANKVAVTMPSSKLKVAIANVLKEEGFIEDFKIEGDTKPVLELALKYFQGKAVVESIQRISRPGLRIYKKKDELPKVMAGLGIAVISTSKGVMTDRAARQAGLGGEIICYVA.

This sequence belongs to the universal ribosomal protein uS8 family. In terms of assembly, part of the 30S ribosomal subunit. Contacts proteins S5 and S12.

In terms of biological role, one of the primary rRNA binding proteins, it binds directly to 16S rRNA central domain where it helps coordinate assembly of the platform of the 30S subunit. The polypeptide is Small ribosomal subunit protein uS8 (Yersinia pseudotuberculosis serotype O:1b (strain IP 31758)).